The sequence spans 435 residues: Xylose isomerase (435 aa).

Positions 306 and 308 each coordinate Mg(2+).

This sequence belongs to the xylose isomerase family. As to quaternary structure, homotetramer. The cofactor is Mg(2+).

Its subcellular location is the cytoplasm. It carries out the reaction alpha-D-xylose = alpha-D-xylulofuranose. This Brucella melitensis biotype 2 (strain ATCC 23457) protein is Xylose isomerase.